Here is a 163-residue protein sequence, read N- to C-terminus: NADH-quinone oxidoreductase subunit I (163 aa).

4Fe-4S ferredoxin-type domains follow at residues 54–84 (LRRY…IESD) and 94–123 (TRYD…ETHI). Residues C64, C67, C70, C74, C103, C106, C109, and C113 each coordinate [4Fe-4S] cluster.

This sequence belongs to the complex I 23 kDa subunit family. NDH-1 is composed of 14 different subunits. Subunits NuoA, H, J, K, L, M, N constitute the membrane sector of the complex. [4Fe-4S] cluster is required as a cofactor.

It is found in the cell inner membrane. The catalysed reaction is a quinone + NADH + 5 H(+)(in) = a quinol + NAD(+) + 4 H(+)(out). In terms of biological role, NDH-1 shuttles electrons from NADH, via FMN and iron-sulfur (Fe-S) centers, to quinones in the respiratory chain. The immediate electron acceptor for the enzyme in this species is believed to be ubiquinone. Couples the redox reaction to proton translocation (for every two electrons transferred, four hydrogen ions are translocated across the cytoplasmic membrane), and thus conserves the redox energy in a proton gradient. The chain is NADH-quinone oxidoreductase subunit I from Ralstonia nicotianae (strain ATCC BAA-1114 / GMI1000) (Ralstonia solanacearum).